A 244-amino-acid chain; its full sequence is 1-(5-phosphoribosyl)-5-[(5-phosphoribosylamino)methylideneamino] imidazole-4-carboxamide isomerase (244 aa).

The active-site Proton acceptor is Asp-10. The Proton donor role is filled by Asp-132.

The protein belongs to the HisA/HisF family.

The protein resides in the cytoplasm. The enzyme catalyses 1-(5-phospho-beta-D-ribosyl)-5-[(5-phospho-beta-D-ribosylamino)methylideneamino]imidazole-4-carboxamide = 5-[(5-phospho-1-deoxy-D-ribulos-1-ylimino)methylamino]-1-(5-phospho-beta-D-ribosyl)imidazole-4-carboxamide. It participates in amino-acid biosynthesis; L-histidine biosynthesis; L-histidine from 5-phospho-alpha-D-ribose 1-diphosphate: step 4/9. The chain is 1-(5-phosphoribosyl)-5-[(5-phosphoribosylamino)methylideneamino] imidazole-4-carboxamide isomerase from Xanthomonas axonopodis pv. citri (strain 306).